The primary structure comprises 325 residues: 5-dehydro-2-deoxygluconokinase (325 aa).

The protein belongs to the carbohydrate kinase PfkB family.

It carries out the reaction 5-dehydro-2-deoxy-D-gluconate + ATP = 6-phospho-5-dehydro-2-deoxy-D-gluconate + ADP + H(+). It participates in polyol metabolism; myo-inositol degradation into acetyl-CoA; acetyl-CoA from myo-inositol: step 5/7. Catalyzes the phosphorylation of 5-dehydro-2-deoxy-D-gluconate (2-deoxy-5-keto-D-gluconate or DKG) to 6-phospho-5-dehydro-2-deoxy-D-gluconate (DKGP). The sequence is that of 5-dehydro-2-deoxygluconokinase from Bacillus licheniformis (strain ATCC 14580 / DSM 13 / JCM 2505 / CCUG 7422 / NBRC 12200 / NCIMB 9375 / NCTC 10341 / NRRL NRS-1264 / Gibson 46).